Consider the following 706-residue polypeptide: Glycine--tRNA ligase beta subunit (706 aa).

The protein belongs to the class-II aminoacyl-tRNA synthetase family. In terms of assembly, tetramer of two alpha and two beta subunits.

The protein resides in the cytoplasm. It carries out the reaction tRNA(Gly) + glycine + ATP = glycyl-tRNA(Gly) + AMP + diphosphate. In Hyphomonas neptunium (strain ATCC 15444), this protein is Glycine--tRNA ligase beta subunit.